Here is a 760-residue protein sequence, read N- to C-terminus: Probable ATP-dependent RNA helicase DDX27 (760 aa).

The interval 1 to 50 (MLAELGFIRTIGENDEVPVEPESDSGDEEEEGPIVLGRKQKALQKNRSAD) is disordered. A compositionally biased stretch (acidic residues) spans 13–32 (ENDEVPVEPESDSGDEEEEG). Ser23, Ser25, and Ser48 each carry phosphoserine. Residues 55-57 (FVF) carry the Required for interaction with the PEBOW complex motif. The disordered stretch occupies residues 80–149 (KRAATTLDEK…TDYSSEDEEI (70 aa)). A compositionally biased stretch (basic and acidic residues) spans 98-122 (KAEDKEAKSGKVEEKEGQADSDLKG). Positions 126–148 (PGEDEAGSKDEDSETDYSSEDEE) are enriched in acidic residues. Phosphoserine occurs at positions 133 and 144. The Nuclear localization signal signature appears at 157–166 (KVKEKKKKKK). A Q motif motif is present at residues 184–212 (LSFQDMNLSRPLLKAITAMGFKQPTPIQK). The region spanning 215–389 (IPVGLLGKDI…SVSLKNPVRI (175 aa)) is the Helicase ATP-binding domain. 228–235 (AATGTGKT) serves as a coordination point for ATP. A DEAD box motif is present at residues 337-340 (DEAD). The Helicase C-terminal domain occupies 419-569 (IVAALLMRTF…DVILKFRDKI (151 aa)). Disordered stretches follow at residues 605 to 624 (KGKETADQEPERSWFQTKEE) and 679 to 760 (RLAK…KRKK). 2 stretches are compositionally biased toward basic residues: residues 682–691 (KRNRRTKRAR) and 744–760 (RQRRGNFKSKSRYKRKK).

Belongs to the DEAD box helicase family. DDX27/DRS1 subfamily. In terms of assembly, associates with PeBoW complex, composed of BOP1, PES1 and WDR12. Interacts directly with BOP1 and PES1.

The protein localises to the nucleus. It is found in the nucleolus. It localises to the chromosome. It carries out the reaction ATP + H2O = ADP + phosphate + H(+). Functionally, probable ATP-dependent RNA helicase. Component of the nucleolar ribosomal RNA (rRNA) processing machinery that regulates 3' end formation of ribosomal 47S rRNA. The polypeptide is Probable ATP-dependent RNA helicase DDX27 (Ddx27) (Mus musculus (Mouse)).